Reading from the N-terminus, the 210-residue chain is Chaperone protein TorD (210 aa).

It belongs to the TorD/DmsD family. TorD subfamily.

Its subcellular location is the cytoplasm. In terms of biological role, involved in the biogenesis of TorA. Acts on TorA before the insertion of the molybdenum cofactor and, as a result, probably favors a conformation of the apoenzyme that is competent for acquiring the cofactor. The protein is Chaperone protein TorD of Salmonella dublin (strain CT_02021853).